Consider the following 251-residue polypeptide: Uridylate kinase (251 aa).

ATP is bound at residue 11 to 14 (KLSG). The interval 19–24 (GNQGFG) is involved in allosteric activation by GTP. Gly-53 serves as a coordination point for UMP. Positions 54 and 58 each coordinate ATP. UMP-binding positions include Asp-73 and 134 to 141 (TGNPYFTT). ATP is bound by residues Thr-161, Tyr-167, and Asp-170.

It belongs to the UMP kinase family. As to quaternary structure, homohexamer.

Its subcellular location is the cytoplasm. It carries out the reaction UMP + ATP = UDP + ADP. It participates in pyrimidine metabolism; CTP biosynthesis via de novo pathway; UDP from UMP (UMPK route): step 1/1. Allosterically activated by GTP. Inhibited by UTP. In terms of biological role, catalyzes the reversible phosphorylation of UMP to UDP. This is Uridylate kinase from Protochlamydia amoebophila (strain UWE25).